Consider the following 118-residue polypeptide: Cell division protein SepF (118 aa).

Residues 1–12 (MGIMSKILGGGG) are important for localization in a ring-like structure at midcell.

Homodimer. Does not oligomerize. Interacts with FtsZ2.

The protein localises to the cytoplasm. Functionally, involved in cell division. Probably acts as a membrane anchor for FstZ2, tethering its filaments to the division site. May be involved in septum closure. The polypeptide is Cell division protein SepF (Haloferax volcanii (strain ATCC 29605 / DSM 3757 / JCM 8879 / NBRC 14742 / NCIMB 2012 / VKM B-1768 / DS2) (Halobacterium volcanii)).